The following is a 425-amino-acid chain: Serine hydroxymethyltransferase (425 aa).

(6S)-5,6,7,8-tetrahydrofolate-binding positions include L126 and G130–L132. K234 carries the post-translational modification N6-(pyridoxal phosphate)lysine.

Belongs to the SHMT family. In terms of assembly, homodimer. Pyridoxal 5'-phosphate serves as cofactor.

Its subcellular location is the cytoplasm. The enzyme catalyses (6R)-5,10-methylene-5,6,7,8-tetrahydrofolate + glycine + H2O = (6S)-5,6,7,8-tetrahydrofolate + L-serine. It participates in one-carbon metabolism; tetrahydrofolate interconversion. The protein operates within amino-acid biosynthesis; glycine biosynthesis; glycine from L-serine: step 1/1. In terms of biological role, catalyzes the reversible interconversion of serine and glycine with tetrahydrofolate (THF) serving as the one-carbon carrier. This reaction serves as the major source of one-carbon groups required for the biosynthesis of purines, thymidylate, methionine, and other important biomolecules. Also exhibits THF-independent aldolase activity toward beta-hydroxyamino acids, producing glycine and aldehydes, via a retro-aldol mechanism. In Desulfotalea psychrophila (strain LSv54 / DSM 12343), this protein is Serine hydroxymethyltransferase.